The chain runs to 884 residues: Formin-like protein 9 (884 aa).

An N-terminal signal peptide occupies residues 1 to 19 (MGMAMRCVLVLFSVSPVLL). The helical transmembrane segment at 140–160 (IVALGVVGLCLVVLGVVIAAF) threads the bilayer. 3 disordered regions span residues 179–204 (FHHG…PDPL), 295–318 (THDS…LSPK), and 403–473 (TMTN…PLPR). Residues 300 to 310 (SDSSYQSLSPD) are compositionally biased toward low complexity. A compositionally biased stretch (pro residues) spans 429-443 (KPAPPPPPQKNPPPN). The region spanning 464 to 884 (VGKDGSPLPR…QTLNLVLPLK (421 aa)) is the FH2 domain.

This sequence belongs to the formin-like family. Class-I subfamily.

It is found in the membrane. This chain is Formin-like protein 9 (FH9), found in Oryza sativa subsp. indica (Rice).